The chain runs to 219 residues: Probable GTP-binding protein EngB (219 aa).

Residues 24 to 207 (VQPEIAFAGR…HELIESWLRP (184 aa)) enclose the EngB-type G domain. GTP is bound by residues 32 to 39 (GRSNAGKS), 59 to 63 (GRTQH), 81 to 84 (DLPG), 148 to 151 (TKCD), and 186 to 188 (FSA). Positions 39 and 61 each coordinate Mg(2+).

The protein belongs to the TRAFAC class TrmE-Era-EngA-EngB-Septin-like GTPase superfamily. EngB GTPase family. It depends on Mg(2+) as a cofactor.

Its function is as follows. Necessary for normal cell division and for the maintenance of normal septation. The sequence is that of Probable GTP-binding protein EngB from Burkholderia cenocepacia (strain HI2424).